The sequence spans 856 residues: Wall-associated receptor kinase 17 (856 aa).

The signal sequence occupies residues 1–42 (MPSRSPACRPRGRNRRSAADAVARPLALALILVSTLPRAAHS). N-linked (GlcNAc...) asparagine glycans are attached at residues Asn-171 and Asn-234. The 38-residue stretch at 297–334 (FEKLCKYGTCVDAPTGAGYLCKCPSGYDGNPYVSDGCQ) folds into the EGF-like 1 domain. 5 disulfide bridges follow: Cys-301–Cys-306, Cys-319–Cys-333, Cys-339–Cys-353, Cys-347–Cys-362, and Cys-364–Cys-379. One can recognise an EGF-like 2; calcium-binding domain in the interval 335–380 (DINECRNYNSNNCTYQNLCNNTLGGYTCSCPENNIGDGYRTGTGCN). 2 N-linked (GlcNAc...) asparagine glycosylation sites follow: Asn-346 and Asn-354. Asn-380 is a glycosylation site (N-linked (GlcNAc...) asparagine). Residues 452–470 (VLGVSLVLMVTTTTAASCY) traverse the membrane as a helical segment. Residues 527-805 (YSESRILGRG…VLQELRRSFT (279 aa)) form the Protein kinase domain. Residues 533-541 (LGRGGQGTV) and Lys-555 contribute to the ATP site. Asp-652 (proton acceptor) is an active-site residue. Residues 816-844 (SIQENSEQEEKHLHESRSIPSLQSSEVST) form a disordered region. Positions 823–832 (QEEKHLHESR) are enriched in basic and acidic residues. A compositionally biased stretch (polar residues) spans 833–844 (SIPSLQSSEVST).

This sequence belongs to the protein kinase superfamily. Ser/Thr protein kinase family. In terms of assembly, interacts with WAK17 isoform 2; the interaction is direct. Interacts with LRR5; the interaction is direct. As to quaternary structure, interacts with WAK17 isoform 1; the interaction is direct. (Microbial infection) Interacts with G.zeae CFEM1 (via CFEM domain); the interaction is direct. Interacts with G.zeae CFEMN1; the interaction is direct. Interacts with G.zeae CFEM5; the interaction is direct. Mn(2+) is required as a cofactor. It depends on Mg(2+) as a cofactor.

The protein localises to the cell membrane. The catalysed reaction is L-seryl-[protein] + ATP = O-phospho-L-seryl-[protein] + ADP + H(+). It catalyses the reaction L-threonyl-[protein] + ATP = O-phospho-L-threonyl-[protein] + ADP + H(+). Kinase that contributes to activation of the hypersensitive response, a form of programmed cell death, upon fungal infection. In terms of biological role, secreted protein that contributes to activation of the hypersensitive response, a form of programmed cell death, upon fungal infection. May sense the presence of fungal material and relay the signal to WAK17 isoform 1. The sequence is that of Wall-associated receptor kinase 17 from Zea mays (Maize).